The following is a 97-amino-acid chain: DNA-directed RNA polymerase subunit omega (97 aa).

This sequence belongs to the RNA polymerase subunit omega family. The RNAP catalytic core consists of 2 alpha, 1 beta, 1 beta' and 1 omega subunit. When a sigma factor is associated with the core the holoenzyme is formed, which can initiate transcription.

The enzyme catalyses RNA(n) + a ribonucleoside 5'-triphosphate = RNA(n+1) + diphosphate. Promotes RNA polymerase assembly. Latches the N- and C-terminal regions of the beta' subunit thereby facilitating its interaction with the beta and alpha subunits. The polypeptide is DNA-directed RNA polymerase subunit omega (Coxiella burnetii (strain Dugway 5J108-111)).